We begin with the raw amino-acid sequence, 429 residues long: MQRSHELFERARQHIVGGVNSPVRAFTGVGGEPPFIARAEGPYLYDEDGNRYVDYVCSWGPMVAGHAHPKVVRAVQAAAADGLSFGAPTEVEIRMAEKLKAMLPSLERVRMVNSGTEATMSALRLARGHTGREKIIKFRGCYHGHVDALLVQAGSGALTLGIPGSPGVPAAVVEQTITLPYNDAEAVRECFQRMGDEIAAVIVEPVAGNMNCVPPVPGFLEALRECCDDHGSVLIFDEVMTGFRVGVQCAQGRYGITPDLTCLGKVIGGGMPVGAFGGKAQIMADLAPEGPVYQAGTLSGNPVAMAAGLATLALVDDPATHRALEEATATLVDGLRERAEAAGVSVSLNQAGSMFGLFFTDQNPVTTFEQVQACDLEAFKVFFHAMLEEGVYMAPSAFEAGFLSTAHDTPAIEYTLAAAERAFARVARR.

Lys265 bears the N6-(pyridoxal phosphate)lysine mark.

Belongs to the class-III pyridoxal-phosphate-dependent aminotransferase family. HemL subfamily. Homodimer. It depends on pyridoxal 5'-phosphate as a cofactor.

It localises to the cytoplasm. It catalyses the reaction (S)-4-amino-5-oxopentanoate = 5-aminolevulinate. Its pathway is porphyrin-containing compound metabolism; protoporphyrin-IX biosynthesis; 5-aminolevulinate from L-glutamyl-tRNA(Glu): step 2/2. The sequence is that of Glutamate-1-semialdehyde 2,1-aminomutase from Alkalilimnicola ehrlichii (strain ATCC BAA-1101 / DSM 17681 / MLHE-1).